Reading from the N-terminus, the 108-residue chain is Ig kappa chain V-V region HP 124E1 (108 aa).

The framework-1 stretch occupies residues D1–C23. An intrachain disulfide couples C23 to C88. The complementarity-determining-1 stretch occupies residues R24 to N34. Residues W35 to Y49 form a framework-2 region. Residues Y50–S56 form a complementarity-determining-2 region. A framework-3 region spans residues G57–C88. A complementarity-determining-3 region spans residues Q89–T97. The tract at residues F98–R108 is framework-4.

The chain is Ig kappa chain V-V region HP 124E1 from Mus musculus (Mouse).